The primary structure comprises 409 residues: Argininosuccinate synthase (409 aa).

Residues Ala12 to Ser20 and Ala39 each bind ATP. The L-citrulline site is built by Tyr90 and Ser95. An ATP-binding site is contributed by Gly120. The L-aspartate site is built by Thr122, Asn126, and Asp127. Asn126 serves as a coordination point for L-citrulline. L-citrulline contacts are provided by Arg130, Ser181, Ser190, Glu266, and Tyr278.

It belongs to the argininosuccinate synthase family. Type 1 subfamily. In terms of assembly, homotetramer.

It localises to the cytoplasm. The enzyme catalyses L-citrulline + L-aspartate + ATP = 2-(N(omega)-L-arginino)succinate + AMP + diphosphate + H(+). It functions in the pathway amino-acid biosynthesis; L-arginine biosynthesis; L-arginine from L-ornithine and carbamoyl phosphate: step 2/3. The polypeptide is Argininosuccinate synthase (Gluconacetobacter diazotrophicus (strain ATCC 49037 / DSM 5601 / CCUG 37298 / CIP 103539 / LMG 7603 / PAl5)).